The primary structure comprises 144 residues: 3-dehydroquinate dehydratase (144 aa).

The active-site Proton acceptor is the Tyr22. The substrate site is built by Asn74, His80, and Asp87. The Proton donor role is filled by His100. Residues 101–102 (LS) and Arg111 each bind substrate.

The protein belongs to the type-II 3-dehydroquinase family. As to quaternary structure, homododecamer.

It carries out the reaction 3-dehydroquinate = 3-dehydroshikimate + H2O. It functions in the pathway metabolic intermediate biosynthesis; chorismate biosynthesis; chorismate from D-erythrose 4-phosphate and phosphoenolpyruvate: step 3/7. Catalyzes a trans-dehydration via an enolate intermediate. The polypeptide is 3-dehydroquinate dehydratase (Clostridium perfringens (strain ATCC 13124 / DSM 756 / JCM 1290 / NCIMB 6125 / NCTC 8237 / Type A)).